Here is a 504-residue protein sequence, read N- to C-terminus: Maturase K (504 aa).

Belongs to the intron maturase 2 family. MatK subfamily.

The protein localises to the plastid. The protein resides in the chloroplast. Functionally, usually encoded in the trnK tRNA gene intron. Probably assists in splicing its own and other chloroplast group II introns. This chain is Maturase K, found in Guizotia abyssinica (Niger).